The primary structure comprises 258 residues: Tryptophan synthase alpha chain (258 aa).

Active-site proton acceptor residues include E47 and D58.

It belongs to the TrpA family. In terms of assembly, tetramer of two alpha and two beta chains.

The enzyme catalyses (1S,2R)-1-C-(indol-3-yl)glycerol 3-phosphate + L-serine = D-glyceraldehyde 3-phosphate + L-tryptophan + H2O. Its pathway is amino-acid biosynthesis; L-tryptophan biosynthesis; L-tryptophan from chorismate: step 5/5. In terms of biological role, the alpha subunit is responsible for the aldol cleavage of indoleglycerol phosphate to indole and glyceraldehyde 3-phosphate. In Bacillus cereus (strain G9842), this protein is Tryptophan synthase alpha chain.